We begin with the raw amino-acid sequence, 778 residues long: Aerobic respiration control sensor protein ArcB (778 aa).

At 1-25 (MKQIRLLAQYYVDLMMKLGLVRFSM) the chain is on the cytoplasmic side. Residues 26–46 (LLALALVVLAIVVQMAVTMVL) form a helical membrane-spanning segment. Residues 47–57 (HGQVESIDVIR) lie on the Periplasmic side of the membrane. The helical transmembrane segment at 58 to 78 (SIFFGLLITPWAVYFLSVVVE) threads the bilayer. Over 79–778 (QLEESRQRLS…KAWVAKATKK (700 aa)) the chain is Cytoplasmic. The PAS domain maps to 153–223 (QSSFLRSFLD…ETDEKVFRHN (71 aa)). Positions 226-278 (LTYEQWLDYPDGRKACFEIRKVPYYDRVGKRHGLMGFGRDITERKRYQDALER) constitute a PAC domain. Residues 289–507 (TISHELRTPL…TFTLTIHAPS (219 aa)) form the Histidine kinase domain. Position 292 is a phosphohistidine; by autocatalysis (H292). The region spanning 527–643 (NVLLVEDIEL…ALTAMIKKFW (117 aa)) is the Response regulatory domain. 4-aspartylphosphate is present on D576. Positions 678–771 (GPKLITDGLA…RHDVEVLKAW (94 aa)) constitute an HPt domain. Phosphohistidine is present on H717.

In terms of processing, activation requires a sequential transfer of a phosphate group from a His in the primary transmitter domain, to an Asp in the receiver domain and to a His in the secondary transmitter domain.

It localises to the cell inner membrane. It catalyses the reaction ATP + protein L-histidine = ADP + protein N-phospho-L-histidine.. In terms of biological role, member of the two-component regulatory system ArcB/ArcA. Sensor-regulator protein for anaerobic repression of the arc modulon. Activates ArcA via a four-step phosphorelay. ArcB can also dephosphorylate ArcA by a reverse phosphorelay involving His-717 and Asp-576. This chain is Aerobic respiration control sensor protein ArcB (arcB), found in Escherichia coli (strain K12).